Here is a 69-residue protein sequence, read N- to C-terminus: Conotoxin Fr3.1 (69 aa).

The first 20 residues, 1–20 (MLKTGVLLLIFLVLFPLATL), serve as a signal peptide directing secretion. A propeptide spanning residues 21–51 (QDADQPVERNVENKQDLNLDKRRGMKLLAQR) is cleaved from the precursor. Gln52 carries the pyrrolidone carboxylic acid modification. Glu54 is subject to 4-carboxyglutamate. Residue Pro58 is modified to 4-hydroxyproline.

It belongs to the conotoxin M superfamily. As to expression, expressed by the venom duct.

It is found in the secreted. In terms of biological role, probable toxin. This chain is Conotoxin Fr3.1, found in Conus frigidus (Frigid cone).